The primary structure comprises 786 residues: AT-rich interactive domain-containing protein 3 (786 aa).

The span at 1 to 16 (MENLTEIESTMESLTE) shows a compositional bias: low complexity. Disordered stretches follow at residues 1 to 182 (MENL…HHAD), 199 to 251 (SGDH…IPAN), and 395 to 420 (DTTVDSTNNKDAHVEANTERQDNSSA). Composition is skewed to basic and acidic residues over residues 18–64 (ESER…HEDS) and 87–97 (DLPKIDDEKNS). Low complexity predominate over residues 130–139 (ENIVSSEVSS). 5 stretches are compositionally biased toward basic and acidic residues: residues 141–156 (ILKDDGDAVEVDRDTA), 169–182 (KLSEDTGSPHHHAD), 199–219 (SGDHEEFPVNPDNKHSEENQS), 234–248 (AEEREIISPGEHKEI), and 402–416 (NNKDAHVEANTERQD). The 92-residue stretch at 494–585 (EEDQSAFMKE…ALLEYERHKV (92 aa)) folds into the ARID domain. The interval 606–638 (QASGSGRARRDAASRAMQGWHSQRLNGNGEVSD) is disordered. The region spanning 686–786 (VTVVDVGPPA…FVRVPLEQLE (101 aa)) is the sHSP domain.

This sequence belongs to the small heat shock protein (HSP20) family.

It localises to the nucleus. The sequence is that of AT-rich interactive domain-containing protein 3 (ARID3) from Arabidopsis thaliana (Mouse-ear cress).